A 148-amino-acid polypeptide reads, in one-letter code: 3-hydroxyacyl-[acyl-carrier-protein] dehydratase FabZ (148 aa).

Residue His-55 is part of the active site.

It belongs to the thioester dehydratase family. FabZ subfamily.

It is found in the cytoplasm. It catalyses the reaction a (3R)-hydroxyacyl-[ACP] = a (2E)-enoyl-[ACP] + H2O. Involved in unsaturated fatty acids biosynthesis. Catalyzes the dehydration of short chain beta-hydroxyacyl-ACPs and long chain saturated and unsaturated beta-hydroxyacyl-ACPs. The protein is 3-hydroxyacyl-[acyl-carrier-protein] dehydratase FabZ of Haemophilus influenzae (strain PittEE).